Reading from the N-terminus, the 86-residue chain is Kappa-theraphotoxin-Cg1a 5 (86 aa).

Residues 1 to 21 (MKVSVLITLAVLGVMFVWTSA) form the signal peptide. A propeptide spanning residues 22 to 50 (AELEERGSDQRDSPAWLKSMERIFQSEER) is cleaved from the precursor. Cystine bridges form between cysteine 52–cysteine 66, cysteine 59–cysteine 71, and cysteine 65–cysteine 78. Phenylalanine 84 is subject to Phenylalanine amide.

This sequence belongs to the neurotoxin 10 (Hwtx-1) family. 28 (Jztx-11) subfamily. Expressed by the venom gland.

The protein resides in the secreted. Its function is as follows. This toxin acts as a voltage-dependent gating-modifier. It inhibits the sodium conductance (IC(50)=124 nM) and slows the fast inactivation (EC(50)=1180 nM) of Nav1.5/SCN5A. It significantly shifts the activation to more depolarized voltages and decreases the deactivation of Nav1.5 currents upon extreme depolarization, but only slightly affects voltage-dependence of steady-state inactivation. In addition, this toxin causes an approximately five-fold decrease in the rate of recovery from inactivation and an approximately 1.9-fold reduction in the closed-state inactivation rate. This toxin integrates the functions of site 3 toxins (alpha-scorpion toxins) with site 4 toxins (beta-scorpion and spider toxins) by targeting multiple sites on Nav1.5. Also shows inhibition of voltage-gated potassium channels (5 uM completely inhibits Kv2.1/KCNB1, whereas 5 uM moderately inhibits Kv4.2/KCND2 Kv4.1/KCND1 channels). In Chilobrachys guangxiensis (Chinese earth tiger tarantula), this protein is Kappa-theraphotoxin-Cg1a 5.